We begin with the raw amino-acid sequence, 330 residues long: Biotin synthase (330 aa).

Positions 42 to 268 (YYGRKVKLNM…INPSKEIRIA (227 aa)) constitute a Radical SAM core domain. [4Fe-4S] cluster contacts are provided by Cys-60, Cys-64, and Cys-67. The [2Fe-2S] cluster site is built by Cys-103, Cys-136, Cys-196, and Arg-266.

Belongs to the radical SAM superfamily. Biotin synthase family. Homodimer. It depends on [4Fe-4S] cluster as a cofactor. [2Fe-2S] cluster is required as a cofactor.

The enzyme catalyses (4R,5S)-dethiobiotin + (sulfur carrier)-SH + 2 reduced [2Fe-2S]-[ferredoxin] + 2 S-adenosyl-L-methionine = (sulfur carrier)-H + biotin + 2 5'-deoxyadenosine + 2 L-methionine + 2 oxidized [2Fe-2S]-[ferredoxin]. It participates in cofactor biosynthesis; biotin biosynthesis; biotin from 7,8-diaminononanoate: step 2/2. Functionally, catalyzes the conversion of dethiobiotin (DTB) to biotin by the insertion of a sulfur atom into dethiobiotin via a radical-based mechanism. This chain is Biotin synthase, found in Macrococcus caseolyticus (strain JCSC5402) (Macrococcoides caseolyticum).